Reading from the N-terminus, the 64-residue chain is Large ribosomal subunit protein bL35 (64 aa).

The protein belongs to the bacterial ribosomal protein bL35 family.

This chain is Large ribosomal subunit protein bL35, found in Ureaplasma parvum serovar 3 (strain ATCC 27815 / 27 / NCTC 11736).